The sequence spans 360 residues: Photosystem II protein D1 (360 aa).

The next 3 helical transmembrane spans lie at 29–46 (YIGWFGVLMIPTLLTATS), 118–133 (HFLTGVACYIGREWEL), and 142–156 (WISVAFTAPVAAAAA). H118 lines the chlorophyll a pocket. Pheophytin a is bound at residue Y126. Residues D170 and E189 each contribute to the [CaMn4O5] cluster site. Residues 197–218 (FHQLGVAGVFGGSLFSAMHGSL) traverse the membrane as a helical segment. H198 contributes to the chlorophyll a binding site. A quinone contacts are provided by residues H215 and 264–265 (SF). H215 provides a ligand contact to Fe cation. H272 contacts Fe cation. The helical transmembrane segment at 274–288 (FLGLWPVVGIWLTAL) threads the bilayer. [CaMn4O5] cluster-binding residues include H332, E333, D342, and A344. Residues 345–360 (SGESLPVALTAPAVNG) constitute a propeptide that is removed on maturation.

The protein belongs to the reaction center PufL/M/PsbA/D family. As to quaternary structure, PSII is composed of 1 copy each of membrane proteins PsbA, PsbB, PsbC, PsbD, PsbE, PsbF, PsbH, PsbI, PsbJ, PsbK, PsbL, PsbM, PsbT, PsbX, PsbY, PsbZ, Psb30/Ycf12, at least 3 peripheral proteins of the oxygen-evolving complex and a large number of cofactors. It forms dimeric complexes. The D1/D2 heterodimer binds P680, chlorophylls that are the primary electron donor of PSII, and subsequent electron acceptors. It shares a non-heme iron and each subunit binds pheophytin, quinone, additional chlorophylls, carotenoids and lipids. D1 provides most of the ligands for the Mn4-Ca-O5 cluster of the oxygen-evolving complex (OEC). There is also a Cl(-1) ion associated with D1 and D2, which is required for oxygen evolution. The PSII complex binds additional chlorophylls, carotenoids and specific lipids. is required as a cofactor. Tyr-161 forms a radical intermediate that is referred to as redox-active TyrZ, YZ or Y-Z. In terms of processing, C-terminally processed by CTPA; processing is essential to allow assembly of the oxygen-evolving complex and thus photosynthetic growth.

The protein resides in the plastid. It localises to the chloroplast thylakoid membrane. It carries out the reaction 2 a plastoquinone + 4 hnu + 2 H2O = 2 a plastoquinol + O2. Its function is as follows. Photosystem II (PSII) is a light-driven water:plastoquinone oxidoreductase that uses light energy to abstract electrons from H(2)O, generating O(2) and a proton gradient subsequently used for ATP formation. It consists of a core antenna complex that captures photons, and an electron transfer chain that converts photonic excitation into a charge separation. The D1/D2 (PsbA/PsbD) reaction center heterodimer binds P680, the primary electron donor of PSII as well as several subsequent electron acceptors. This chain is Photosystem II protein D1, found in Porphyra purpurea (Red seaweed).